We begin with the raw amino-acid sequence, 425 residues long: Cyclin-K (425 aa).

Residues 262 to 425 (GKQPIPQQPP…RRYLDDDRNL (164 aa)) form a disordered region. The segment covering 366–377 (AEPAAASELDPA) has biased composition (low complexity). Over residues 379 to 399 (GPAPPLPHGAPPPLPHRPPPT) the composition is skewed to pro residues.

The protein belongs to the cyclin family.

The protein resides in the nucleus. Its function is as follows. Regulatory subunit of cyclin-dependent kinases that mediates activation of target kinases. Plays a role in transcriptional regulation via its role in regulating the phosphorylation of the C-terminal domain (CTD) of the large subunit of RNA polymerase II (POLR2A). This Danio rerio (Zebrafish) protein is Cyclin-K (ccnk).